The chain runs to 118 residues: Transmembrane protein 243 (118 aa).

N-acetylmethionine is present on Met-1. The next 3 membrane-spanning stretches (helical) occupy residues 32–52 (LVVGSLTSLLILVTLISAFVF), 62–82 (IFFAVCISLSSITACILIYWY), and 94–114 (LIYYIIFSIIMLCICANLYFH).

The protein belongs to the TMEM243 family. In terms of tissue distribution, widely expressed.

The protein resides in the membrane. This Homo sapiens (Human) protein is Transmembrane protein 243 (TMEM243).